A 196-amino-acid chain; its full sequence is Inosine triphosphate pyrophosphatase 1 (196 aa).

20 to 25 contributes to the ITP binding site; the sequence is TGNDGK. E48 contributes to the Mg(2+) binding site. ITP is bound by residues K61, 77–78, K94, 153–156, K177, and 182–183; these read DT, FGWD, and PR.

Belongs to the HAM1 NTPase family. In terms of assembly, homodimer. The cofactor is Mg(2+). Mn(2+) is required as a cofactor.

It is found in the cytoplasm. The enzyme catalyses ITP + H2O = IMP + diphosphate + H(+). It carries out the reaction dITP + H2O = dIMP + diphosphate + H(+). It catalyses the reaction XTP + H2O = XMP + diphosphate + H(+). Pyrophosphatase that hydrolyzes non-canonical purine nucleotides such as inosine triphosphate (ITP), deoxyinosine triphosphate (dITP) or xanthosine 5'-triphosphate (XTP) to their respective monophosphate derivatives. The enzyme does not distinguish between the deoxy- and ribose forms. Probably excludes non-canonical purines from RNA and DNA precursor pools, thus preventing their incorporation into RNA and DNA and avoiding chromosomal lesions. The sequence is that of Inosine triphosphate pyrophosphatase 1 from Trypanosoma cruzi (strain CL Brener).